Here is a 623-residue protein sequence, read N- to C-terminus: Chaperone protein HtpG (623 aa).

The a; substrate-binding stretch occupies residues 1–328 (MTQEKKKFDA…SEDLPLNISR (328 aa)). The interval 329–544 (ESLQHNSILD…ESAMDIRMER (216 aa)) is b. The interval 545-623 (FLIEQKQIAN…DIVQKAILSL (79 aa)) is c.

The protein belongs to the heat shock protein 90 family. Homodimer.

It localises to the cytoplasm. In terms of biological role, molecular chaperone. Has ATPase activity. This is Chaperone protein HtpG from Rickettsia canadensis (strain McKiel).